Here is a 907-residue protein sequence, read N- to C-terminus: Gamma-tubulin complex component 3 (907 aa).

An N-acetylalanine modification is found at Ala-2. Ser-113 bears the Phosphoserine mark. The span at 210–230 (NQPSSQATTSKGVPSAVSRNM) shows a compositional bias: polar residues. The interval 210 to 241 (NQPSSQATTSKGVPSAVSRNMTRSRREGDTGG) is disordered.

This sequence belongs to the TUBGCP family. In terms of assembly, component of the gamma-tubulin ring complex (gTuRC) consisting of TUBGCP2, TUBGCP3, TUBGCP4, TUBGCP5 and TUBGCP6 and gamma-tubulin TUBG1 or TUBG2. TUBGCP2, TUBGCP3, TUBGCP4, TUBGCP5 and TUBGCP6 assemble in a 5:5:2:1:1 stoichiometry; each is associated with a gamma-tubulin, thereby arranging 14 gamma-tubulins in a helical manner. Gamma-tubulin at the first position is blocked by TUBGCP3 at the last position, allowing 13 protafilaments to grow into a microtubule. The gTuRC (via TUBGCP3 and TUBGCP6) interacts with ACTB and MZT1; the interactions form a luminal bridge that stabilizes the initial structure during complex assembly. The gTuRC (via TUBGCP2) interacts with MZT2A/MZT2B and CDK5RAP2 (via CM1 motif); the interactions play a role in gTuRC activation. Interacts with NIN (via N-terminus); the interaction may promote recruitment of the gamma-tubulin ring complex to the centrosome. Ubiquitously expressed.

Its subcellular location is the cytoplasm. It is found in the cytoskeleton. The protein localises to the microtubule organizing center. It localises to the centrosome. Component of the gamma-tubulin ring complex (gTuRC) which mediates microtubule nucleation. The gTuRC regulates the minus-end nucleation of alpha-beta tubulin heterodimers that grow into microtubule protafilaments, a critical step in centrosome duplication and spindle formation. In Homo sapiens (Human), this protein is Gamma-tubulin complex component 3 (TUBGCP3).